Here is a 353-residue protein sequence, read N- to C-terminus: E3 ubiquitin-protein ligase TRIM63 (353 aa).

The segment at 23 to 79 (CPICLEMFTKPVVILPCQHNLCRKCANDIFQAANPYWTSRGSSVSMSGGRFRCPTCR) adopts an RING-type zinc-finger fold. The tract at residues 74-218 (RCPTCRHEVI…LSQKFDTLYA (145 aa)) is interaction with TTN. Residues 117-159 (GSHPMCKEHEDEKINIYCLTCEVPTCSMCKVFGIHKACEVAPL) form a B box-type zinc finger. Zn(2+) is bound by residues cysteine 122, histidine 125, cysteine 145, and histidine 151. The stretch at 207-269 (EELSQKFDTL…VETAIQSLDE (63 aa)) forms a coiled coil. The region spanning 267-325 (LDEPGGATFLLTAKQLIKSIVEASKGCQLGKTEQGFENMDFFTLDLEHIADALRAIDFG) is the COS domain. Over residues 326 to 344 (TDEEEEEFIEEEDQEEEES) the composition is skewed to acidic residues. The interval 326–353 (TDEEEEEFIEEEDQEEEESTEGKEEGHQ) is disordered.

As to quaternary structure, homodimer. Homooligomer and heterooligomer. Interacts with SUMO2, titin/TTN and GMEB1. Interacts with TRIM54 and probably with TRIM55 and TNNI3. Forms a ternary complex with RACK1 and PRKCE. Interacts with CKM. As to expression, muscle specific. Selectively expressed in heart and skeletal muscle. Also expressed in the iris.

It is found in the cytoplasm. The protein resides in the nucleus. Its subcellular location is the myofibril. The protein localises to the sarcomere. It localises to the m line. It is found in the z line. The enzyme catalyses S-ubiquitinyl-[E2 ubiquitin-conjugating enzyme]-L-cysteine + [acceptor protein]-L-lysine = [E2 ubiquitin-conjugating enzyme]-L-cysteine + N(6)-ubiquitinyl-[acceptor protein]-L-lysine.. Its pathway is protein modification; protein ubiquitination. E3 ubiquitin ligase. Mediates the ubiquitination and subsequent proteasomal degradation of CKM, GMEB1 and HIBADH. Regulates the proteasomal degradation of muscle proteins under amino acid starvation, where muscle protein is catabolized to provide other organs with amino acids. Inhibits de novo skeletal muscle protein synthesis under amino acid starvation. Regulates proteasomal degradation of cardiac troponin I/TNNI3 and probably of other sarcomeric-associated proteins. May play a role in striated muscle atrophy and hypertrophy by regulating an anti-hypertrophic PKC-mediated signaling pathway. May regulate the organization of myofibrils through TTN in muscle cells. This is E3 ubiquitin-protein ligase TRIM63 (TRIM63) from Homo sapiens (Human).